Consider the following 278-residue polypeptide: Elongation factor Ts (278 aa).

Residues 81-84 (TDFV) are involved in Mg(2+) ion dislocation from EF-Tu.

It belongs to the EF-Ts family.

It localises to the cytoplasm. Its function is as follows. Associates with the EF-Tu.GDP complex and induces the exchange of GDP to GTP. It remains bound to the aminoacyl-tRNA.EF-Tu.GTP complex up to the GTP hydrolysis stage on the ribosome. This chain is Elongation factor Ts, found in Thermobifida fusca (strain YX).